The chain runs to 222 residues: Glutathione S-transferase A4 (222 aa).

Met1 carries the post-translational modification N-acetylmethionine. Residues 3-83 (AKPKLYYFNG…YLAAKYNLYG (81 aa)) form the GST N-terminal domain. Glutathione is bound by residues Tyr9, 53 to 55 (GQV), and 66 to 68 (TQT). In terms of domain architecture, GST C-terminal spans 85–208 (DLKERVRIDM…QPGSQRKPPP (124 aa)).

It belongs to the GST superfamily. Alpha family. Homodimer. Post-translationally, the N-terminus is blocked.

Its subcellular location is the cytoplasm. It catalyses the reaction RX + glutathione = an S-substituted glutathione + a halide anion + H(+). Functionally, conjugation of reduced glutathione to a wide number of exogenous and endogenous hydrophobic electrophiles. The polypeptide is Glutathione S-transferase A4 (Gsta4) (Mus musculus (Mouse)).